A 197-amino-acid chain; its full sequence is Chalcone--flavanone isomerase 2 (197 aa).

Positions 23, 88, and 165 each coordinate substrate.

Belongs to the chalcone isomerase family.

The catalysed reaction is a chalcone = a flavanone.. Its pathway is secondary metabolite biosynthesis; flavonoid biosynthesis. Its function is as follows. Catalyzes the intramolecular cyclization of bicyclic chalcones into tricyclic (S)-flavanones. Responsible for the isomerization of 4,2',4',6'-tetrahydroxychalcone (also termed chalcone) into naringenin. The chain is Chalcone--flavanone isomerase 2 (CHI2) from Medicago sativa (Alfalfa).